We begin with the raw amino-acid sequence, 416 residues long: Phosphoglycerate kinase (416 aa).

(2R)-3-phosphoglycerate is bound by residues Val-22, Asp-23, Phe-24, Asn-25, Gln-37, Arg-38, Ser-61, His-62, Gly-64, Arg-65, Leu-120, Arg-121, His-168, and Arg-169. ADP is bound at residue Gly-212. Gly-212 contributes to the CDP binding site. AMP-binding residues include Ala-213 and Lys-214. Ala-213 lines the ATP pocket. Position 213 (Ala-213) interacts with Mg(2+). Asp-217 provides a ligand contact to CDP. Asp-217 contacts Mg(2+). Lys-218 is a binding site for AMP. Lys-218 provides a ligand contact to ATP. Gly-236 provides a ligand contact to ADP. Gly-236 contacts CDP. AMP is bound by residues Gly-237 and Gly-311. ATP contacts are provided by Gly-237 and Gly-311. 2 residues coordinate CDP: Gly-336 and Phe-341. Phe-341 serves as a coordination point for ADP. An AMP-binding site is contributed by Glu-342. ATP is bound by residues Glu-342, Asp-373, and Thr-374. Asp-373 contacts Mg(2+).

Belongs to the phosphoglycerate kinase family. As to quaternary structure, monomer. Mg(2+) serves as cofactor. Expressed in all cells of the worm (at protein level), higher expression in the cells associated with the tubercles (tegumental modifications), the muscle and along the tegument.

It catalyses the reaction (2R)-3-phosphoglycerate + ATP = (2R)-3-phospho-glyceroyl phosphate + ADP. Its pathway is carbohydrate degradation; glycolysis; pyruvate from D-glyceraldehyde 3-phosphate: step 2/5. In terms of biological role, involved in the seventh step in glycolysis. Catalyzes the conversion of 1,3-bisphosphoglycerate ((2R)-3-phospho-glyceroyl phosphate) to 3-phosphoglycerate ((2R)-3-phosphoglycerate) and results in the formation of ATP. Associated with the tegument to provide the energy needed for the tegumental repair resulting from immune damage. This Schistosoma mansoni (Blood fluke) protein is Phosphoglycerate kinase (PGK).